We begin with the raw amino-acid sequence, 217 residues long: Ribosomal RNA small subunit methyltransferase G (217 aa).

S-adenosyl-L-methionine-binding positions include Gly85, Leu90, 135–136 (IE), and Arg149.

This sequence belongs to the methyltransferase superfamily. RNA methyltransferase RsmG family.

It localises to the cytoplasm. It catalyses the reaction guanosine(527) in 16S rRNA + S-adenosyl-L-methionine = N(7)-methylguanosine(527) in 16S rRNA + S-adenosyl-L-homocysteine. Functionally, specifically methylates the N7 position of guanine in position 527 of 16S rRNA. This chain is Ribosomal RNA small subunit methyltransferase G, found in Acidiphilium cryptum (strain JF-5).